We begin with the raw amino-acid sequence, 366 residues long: Flagellar P-ring protein (366 aa).

The signal sequence occupies residues methionine 1–alanine 24.

This sequence belongs to the FlgI family. The basal body constitutes a major portion of the flagellar organelle and consists of four rings (L,P,S, and M) mounted on a central rod.

It is found in the periplasm. Its subcellular location is the bacterial flagellum basal body. Assembles around the rod to form the L-ring and probably protects the motor/basal body from shearing forces during rotation. The sequence is that of Flagellar P-ring protein from Nitratidesulfovibrio vulgaris (strain ATCC 29579 / DSM 644 / CCUG 34227 / NCIMB 8303 / VKM B-1760 / Hildenborough) (Desulfovibrio vulgaris).